The primary structure comprises 238 residues: MAQEMTGNENIGKEELARRPIRSFVLRQGRLTHAQQRALDELMPVFGVPYAPVILDLDSLFGREGSPKVLEIGFGMGDSTAKIAQSQPECDFIGVEVHTPGVGSLLKQIGELQLNNLRIIQHDAVEVLQHMIADASLDGVHIFFPDPWHKKRHHKRRLIQAAFVKLLCSKMKAGAYLHVATDWQEYAEWVLDILQQEPLLENTAQSYAPKPDYRPLTKFENRGIKLGHGVWDIIFRRK.

S-adenosyl-L-methionine-binding residues include Glu71, Glu96, Asp123, and Asp146. The active site involves Asp146. Substrate-binding positions include Lys150, Asp182, and 217–220; that span reads TKFE.

This sequence belongs to the class I-like SAM-binding methyltransferase superfamily. TrmB family.

The enzyme catalyses guanosine(46) in tRNA + S-adenosyl-L-methionine = N(7)-methylguanosine(46) in tRNA + S-adenosyl-L-homocysteine. Its pathway is tRNA modification; N(7)-methylguanine-tRNA biosynthesis. In terms of biological role, catalyzes the formation of N(7)-methylguanine at position 46 (m7G46) in tRNA. This Methylobacillus flagellatus (strain ATCC 51484 / DSM 6875 / VKM B-1610 / KT) protein is tRNA (guanine-N(7)-)-methyltransferase.